The chain runs to 385 residues: MKMLPGVGVFGTGSSARVLVPLLRAEGFTVQALWGKTEEEAKQLAEEMNIAFYTSRTDDVLLHQDVDLVCINMPPPLTRQISVKALGIGKNVVCEKAATSVDAFRMVTASRYYPQLMSLVGNVLRFLPAFVRMKQLIAEHYVGAVMICDARVYSGSLLSPNYGWICDELMGGGGLHTMGTYIVDLLTHLTGQRAEKVHGLLKTFVRQNAAIRGIRHVTSDDFCFFQMLMGGGVCSTVTLNFNMPGAFVHEVMVVGSAGRLVARGADLYGQKNSAPQEELLLRDSLAVGAGLPEQGAQDVPLLYLKGMVYMVQALRQSFQGQGDRRTWDHTPVSMAASFEDGLYMQSVVDAIKRSSRSGEWEAVEVLAEEPDANQNLCEALQRNNL.

An N-terminal signal peptide occupies residues 1-25; that stretch reads MKMLPGVGVFGTGSSARVLVPLLRA.

This sequence belongs to the Gfo/Idh/MocA family.

Its subcellular location is the secreted. It localises to the extracellular space. It is found in the extracellular matrix. Promotes matrix assembly. This Bos taurus (Bovine) protein is Glucose-fructose oxidoreductase domain-containing protein 2 (GFOD2).